Consider the following 534-residue polypeptide: ATP-dependent rRNA helicase RRP3 (534 aa).

Positions 67 to 107 (KQQALQKQQKQQKQQEQENANHNQTESSLSSSSSTTSSSIT) are disordered. 2 stretches are compositionally biased toward low complexity: residues 68 to 80 (QQAL…QQKQ) and 91 to 107 (TESS…SSIT). The short motif at 118–146 (KTFKELNLVPDLLESIESMKFTKPTPIQS) is the Q motif element. A Helicase ATP-binding domain is found at 149 to 320 (IPHALEGKDI…RASLHNPVRV (172 aa)). ATP is bound at residue 162–169 (AQTGSGKT). The DEAD box motif lies at 268–271 (DEAD). A Helicase C-terminal domain is found at 347 to 492 (ILIHLLNEFM…EDKPPKEVLD (146 aa)). 2 stretches are compositionally biased toward basic and acidic residues: residues 505–517 (AIRQ…DKRN) and 525–534 (NRDDADREER). A disordered region spans residues 505-534 (AIRQTKEIHDKRNGGGGRRRNRDDADREER).

The protein belongs to the DEAD box helicase family. DDX47/RRP3 subfamily. As to quaternary structure, interacts with the SSU processome.

The protein localises to the nucleus. The catalysed reaction is ATP + H2O = ADP + phosphate + H(+). In terms of biological role, ATP-dependent rRNA helicase required for pre-ribosomal RNA processing. Involved in the maturation of the 35S-pre-rRNA and to its cleavage to mature 18S rRNA. This chain is ATP-dependent rRNA helicase RRP3, found in Candida albicans (strain SC5314 / ATCC MYA-2876) (Yeast).